The primary structure comprises 421 residues: O-acetyl-L-homoserine sulfhydrylase 1 (421 aa).

K206 carries the post-translational modification N6-(pyridoxal phosphate)lysine.

The protein belongs to the trans-sulfuration enzymes family. In terms of assembly, homotetramer. Requires pyridoxal 5'-phosphate as cofactor.

It carries out the reaction O-acetyl-L-homoserine + hydrogen sulfide = L-homocysteine + acetate. It participates in amino-acid biosynthesis; L-methionine biosynthesis via de novo pathway; L-homocysteine from O-acetyl-L-homoserine: step 1/1. With respect to regulation, inhibited by the carbonyl reagents hydroxylamine and phenylhydrazine. Also inhibited by methionine and propargylglycine. Catalyzes the conversion of O-acetyl-L-homoserine (OAH) into homocysteine in the methionine biosynthesis pathway. Has weak activity with O-acetyl-L-serine, O-phospho-L-serine, L-serine, O-succinyl-L-homoserine and L-homoserine. Shows low CTT beta-lyase activity and very low CTT gamma-synthase activity. The chain is O-acetyl-L-homoserine sulfhydrylase 1 from Thermus thermophilus (strain ATCC 27634 / DSM 579 / HB8).